A 349-amino-acid polypeptide reads, in one-letter code: UDP-3-O-acylglucosamine N-acyltransferase (349 aa).

Residue His-246 is the Proton acceptor of the active site.

It belongs to the transferase hexapeptide repeat family. LpxD subfamily. As to quaternary structure, homotrimer.

It carries out the reaction a UDP-3-O-[(3R)-3-hydroxyacyl]-alpha-D-glucosamine + a (3R)-hydroxyacyl-[ACP] = a UDP-2-N,3-O-bis[(3R)-3-hydroxyacyl]-alpha-D-glucosamine + holo-[ACP] + H(+). It participates in bacterial outer membrane biogenesis; LPS lipid A biosynthesis. Catalyzes the N-acylation of UDP-3-O-acylglucosamine using 3-hydroxyacyl-ACP as the acyl donor. Is involved in the biosynthesis of lipid A, a phosphorylated glycolipid that anchors the lipopolysaccharide to the outer membrane of the cell. The protein is UDP-3-O-acylglucosamine N-acyltransferase of Protochlamydia amoebophila (strain UWE25).